The chain runs to 82 residues: Small ribosomal subunit protein bS16 (82 aa).

It belongs to the bacterial ribosomal protein bS16 family.

The protein is Small ribosomal subunit protein bS16 of Klebsiella pneumoniae (strain 342).